The chain runs to 68 residues: Beta-defensin 1 (68 aa).

The signal sequence occupies residues 1–21 (MRTSYLLLFTLCLLMSEMASG). Residues 22–32 (DNFLTGLGHRS) constitute a propeptide that is removed on maturation. 3 disulfide bridges follow: cysteine 37–cysteine 66, cysteine 44–cysteine 59, and cysteine 49–cysteine 67.

It belongs to the beta-defensin family. As to quaternary structure, monomer. Homodimer.

The protein resides in the secreted. Its subcellular location is the membrane. Functionally, has bactericidal activity. May act as a ligand for C-C chemokine receptor CCR6. Positively regulates the sperm motility and bactericidal activity in a CCR6-dependent manner. Binds to CCR6 and triggers Ca2+ mobilization in the sperm which is important for its motility. The sequence is that of Beta-defensin 1 (DEFB1) from Presbytis melalophos (Mitred leaf monkey).